The sequence spans 163 residues: Inner membrane protein YcdZ (163 aa).

The Cytoplasmic portion of the chain corresponds to 1–2; that stretch reads MN. A helical transmembrane segment spans residues 3–23; the sequence is ILLSIAITTGILSGIWGWVAV. A topological domain (periplasmic) is located at residue Ser24. Residues 25–45 traverse the membrane as a helical segment; it reads LGLLSWAGFLGCTAYFACPQG. Topologically, residues 46–48 are cytoplasmic; sequence GLK. Residues 49–69 form a helical membrane-spanning segment; it reads GLAISAATLLSGVVWAMVIIY. At 70–71 the chain is on the periplasmic side; sequence GS. A helical transmembrane segment spans residues 72-92; that stretch reads ALAPHLEILGYVITGIVAFLM. At 93–98 the chain is on the cytoplasmic side; it reads CIQAKQ. Residues 99–119 traverse the membrane as a helical segment; it reads LLLSFVPGTFIGACATFAGQG. Over 120–122 the chain is Periplasmic; sequence DWK. A helical membrane pass occupies residues 123 to 143; it reads LVLPSLALGLIFGYAMKNSGL. At 144–163 the chain is on the cytoplasmic side; it reads WLAARSAKTAHREQEIKNKA.

It to E.coli YahC.

Its subcellular location is the cell inner membrane. The chain is Inner membrane protein YcdZ (ycdZ) from Escherichia coli (strain K12).